The following is a 331-amino-acid chain: DNA fragmentation factor subunit alpha (331 aa).

N-acetylmethionine is present on methionine 1. Residues 17–96 (TLKPCLLRRN…ALASNEKWAY (80 aa)) enclose the CIDE-N domain. At threonine 243 the chain carries Phosphothreonine. A disordered region spans residues 305–331 (SLRSISASKASPPGDLQNPKRARQDPT). At serine 315 the chain carries Phosphoserine.

In terms of assembly, heterodimer of DFFA and DFFB. Caspase-3 cleaves DFF45 at 2 sites to generate an active factor.

The protein resides in the cytoplasm. In terms of biological role, inhibitor of the caspase-activated DNase (DFF40). The polypeptide is DNA fragmentation factor subunit alpha (DFFA) (Homo sapiens (Human)).